Reading from the N-terminus, the 306-residue chain is Homeobox protein Hox-C13a (306 aa).

The segment at residues 236 to 295 (GRKKRVPYTKIQLKELEKEYAASKFITKDKRRRISATTNLSERQVTIWFQNRRVKEKKFV) is a DNA-binding region (homeobox).

The protein belongs to the Abd-B homeobox family.

It localises to the nucleus. Its function is as follows. Sequence-specific transcription factor which is part of a developmental regulatory system that provides cells with specific positional identities on the anterior-posterior axis. This chain is Homeobox protein Hox-C13a (hoxc13a), found in Danio rerio (Zebrafish).